A 610-amino-acid polypeptide reads, in one-letter code: Elongation factor 4 (610 aa).

One can recognise a tr-type G domain in the interval 14-196; it reads NRIRNFSIIA…ALVANIPPPK (183 aa). Residues 26 to 31 and 143 to 146 each bind GTP; these read DHGKST and NKID.

This sequence belongs to the TRAFAC class translation factor GTPase superfamily. Classic translation factor GTPase family. LepA subfamily.

The protein resides in the cell inner membrane. It carries out the reaction GTP + H2O = GDP + phosphate + H(+). Required for accurate and efficient protein synthesis under certain stress conditions. May act as a fidelity factor of the translation reaction, by catalyzing a one-codon backward translocation of tRNAs on improperly translocated ribosomes. Back-translocation proceeds from a post-translocation (POST) complex to a pre-translocation (PRE) complex, thus giving elongation factor G a second chance to translocate the tRNAs correctly. Binds to ribosomes in a GTP-dependent manner. This Legionella pneumophila (strain Lens) protein is Elongation factor 4.